A 232-amino-acid chain; its full sequence is Charged multivesicular body protein 4c (232 aa).

Disordered regions lie at residues 1-23 (MSKL…PSAQ) and 177-232 (NKKM…AWAT). An intramolecular interaction with C-terminus region spans residues 1-153 (MSKLGKFFKG…EISEAFSQRV (153 aa)). Coiled-coil stretches lie at residues 21 to 45 (SAQE…YLEN) and 125 to 185 (LNKI…SLEL). Positions 154–232 (QFADGFDEAE…DFKQLAAWAT (79 aa)) are intramolecular interaction with N-terminus. Ser210 is subject to Phosphoserine; by AURKB.

Belongs to the SNF7 family. In terms of assembly, probable core component of the endosomal sorting required for transport complex III (ESCRT-III). ESCRT-III components are thought to multimerize to form a flat lattice on the perimeter membrane of the endosome. Several assembly forms of ESCRT-III may exist that interact and act sequentially. Self-associates. Interacts with CHMP2A. Interacts with CHMP4A. Interacts with CHMP4B. Interacts with CHMP6. Interacts with VPS4A. Interacts with PDCD6IP; the interaction is direct. Post-translationally, phosphorylated at Ser-210 by AURKB during cytokinesis: together with ZFYVE19/ANCHR, phosphorylated CHMP4C retains abscission-competent VPS4 (VPS4A and/or VPS4B) at the midbody ring until abscission checkpoint signaling is terminated at late cytokinesis.

The protein localises to the cytoplasm. Its subcellular location is the cytosol. It is found in the late endosome membrane. It localises to the midbody. The protein resides in the midbody ring. Probable core component of the endosomal sorting required for transport complex III (ESCRT-III) which is involved in multivesicular bodies (MVBs) formation and sorting of endosomal cargo proteins into MVBs. MVBs contain intraluminal vesicles (ILVs) that are generated by invagination and scission from the limiting membrane of the endosome and mostly are delivered to lysosomes enabling degradation of membrane proteins, such as stimulated growth factor receptors, lysosomal enzymes and lipids. The MVB pathway appears to require the sequential function of ESCRT-O, -I,-II and -III complexes. ESCRT-III proteins mostly dissociate from the invaginating membrane before the ILV is released. The ESCRT machinery also functions in topologically equivalent membrane fission events, such as the terminal stages of cytokinesis. Key component of the cytokinesis checkpoint, a process required to delay abscission to prevent both premature resolution of intercellular chromosome bridges and accumulation of DNA damage: upon phosphorylation by AURKB, together with ZFYVE19/ANCHR, retains abscission-competent VPS4 (VPS4A and/or VPS4B) at the midbody ring until abscission checkpoint signaling is terminated at late cytokinesis. Deactivation of AURKB results in dephosphorylation of CHMP4C followed by its dissociation from ANCHR and VPS4 and subsequent abscission. ESCRT-III proteins are believed to mediate the necessary vesicle extrusion and/or membrane fission activities, possibly in conjunction with the AAA ATPase VPS4. CHMP4A/B/C are required for the exosomal release of SDCBP, CD63 and syndecan. This is Charged multivesicular body protein 4c (Chmp4c) from Mus musculus (Mouse).